The sequence spans 116 residues: MNHYSFSSLIRALIPLSLVIVSAVWQPAALADTRHIIVDSGDSALSKEAARQSKEQWDSTRSLRNKVNNRVEKEFDKTEKSIDGREKCNASYNVNAYWENTTDRCLDRRTGRPVAP.

The first 31 residues, 1 to 31 (MNHYSFSSLIRALIPLSLVIVSAVWQPAALA), serve as a signal peptide directing secretion.

This sequence belongs to the UPF0482 family.

This chain is UPF0482 protein ECA2253, found in Pectobacterium atrosepticum (strain SCRI 1043 / ATCC BAA-672) (Erwinia carotovora subsp. atroseptica).